The sequence spans 284 residues: Putative ABC transporter ATP-binding protein PH1815 (284 aa).

One can recognise an ABC transporter domain in the interval 4–244 (IEVEDVSFRY…VEFLRTIGVK (241 aa)). 38–45 (GPSGSGKS) is a binding site for ATP.

This sequence belongs to the ABC transporter superfamily.

Its subcellular location is the cell membrane. Its function is as follows. Probably part of an ABC transporter complex. Responsible for energy coupling to the transport system. The sequence is that of Putative ABC transporter ATP-binding protein PH1815 from Pyrococcus horikoshii (strain ATCC 700860 / DSM 12428 / JCM 9974 / NBRC 100139 / OT-3).